The chain runs to 187 residues: Probable chemoreceptor glutamine deamidase CheD (187 aa).

The disordered stretch occupies residues 164 to 187 (APQDVRRPTPPPMPAVASGDVDLF).

This sequence belongs to the CheD family.

The enzyme catalyses L-glutaminyl-[protein] + H2O = L-glutamyl-[protein] + NH4(+). In terms of biological role, probably deamidates glutamine residues to glutamate on methyl-accepting chemotaxis receptors (MCPs), playing an important role in chemotaxis. The protein is Probable chemoreceptor glutamine deamidase CheD of Caulobacter vibrioides (strain ATCC 19089 / CIP 103742 / CB 15) (Caulobacter crescentus).